A 451-amino-acid polypeptide reads, in one-letter code: MLCKTGGCVEGRAAEDQSTRKVHWGQEGSGQSPEARPRALDMISRLEPSRGPSHAHWWHIISPQLAVMLEETGYPVEKQLEILTFLYHWVIPYLAPVAAGNAASSCNWKSLLPSAIVPLEYSWKWDSSGKAREPEIRLTIEVFGELSGTQFDPLNQAPAMELLYRLSSILPGVNQILASHFRCKFFDHDNVKYMEEPRLDTLPRSTMLTYMTPRKLGQQGFAPLSEYVSAIQALGQASGRTLDTLTNFLSTSPEGVHLHPFGLAFDNVEPSSSRLKLYFFSNRTSYNSMREVLTLGGRIYSESYDMEEKLRTIYSLAQLLMGCPENNAEDADIPLLPITHSQHTAAERATLLSGFQYYFDVAPGADLPSVKFYIPVRKEHANDRAVGSALTGWFREQGRGKFCDNYMRMLERLAGGLELGECRGLHSFISCMIGGDGEIEVTSYLLPGSEA.

Residues 14–37 (AEDQSTRKVHWGQEGSGQSPEARP) form a disordered region. Glutamate 120 provides a ligand contact to L-tryptophan. Residues arginine 137, arginine 274, lysine 276, tyrosine 278, and tyrosine 373 each coordinate substrate.

The protein belongs to the tryptophan dimethylallyltransferase family.

The enzyme catalyses quinolinone B + dimethylallyl diphosphate = peniprequinolone + diphosphate. Its pathway is secondary metabolite biosynthesis. The protein operates within alkaloid biosynthesis. It participates in mycotoxin biosynthesis. Its function is as follows. Prenyltransferase; part of the gene cluster that mediates the biosynthesis of the aspoquinolone mycotoxins. Within the pathway, the prenyltransferase asqH1 catalyzes the canonical Friedel-Crafts alkylation of quinolinone B with dimethylallyl cation to yield dimethylallyl quinolone. The first step of the pathway is catalyzed by the nonribosomal peptide synthetase asqK that condenses anthranilic acid and O-methyl-L-tyrosine to produce 4'-methoxycyclopeptin. 4'-methoxycyclopeptin is then converted to 4'-methoxydehydrocyclopeptin by the ketoglutarate-dependent dioxygenase asqJ. AsqJ also converts its first product 4'-methoxydehydrocyclopeptin to 4'-methoxycyclopenin. The following conversion of 4'-methoxycyclopenin into 4'-methoxyviridicatin is catalyzed by the cyclopenase asqI. 4'-methoxyviridicatin is the precursor of quinolone natural products, and is further converted to quinolinone B. The prenyltransferase asqH1 then catalyzes the canonical Friedel-Crafts alkylation of quinolinone B with dimethylallyl cation to yield dimethylallyl quinolone, which is subjected to FAD-dependent dehydrogenation by the FAD-linked oxidoreductase asqF to yield conjugated aryl diene. The delta(3') double bond then serves as the site of the second alkylation with DMAPP catalyzed by the prenyltransferase asqH2 to yield a carbenium ion intermediate, which can be attacked by H(2)O to yield a styrenyl quinolone containing a C3'-hydroxyprenyl chain. The FAD-dependent monooxygenase asqG performs epoxidation of the terminal C7'-C8' olefin. Finally, after dehydratation of the epoxide at C3 by asqC, the quinolone epoxide rearrangement protein asqO catalyzes an enzymatic 3-exo-tet cyclization to yield the cyclopropyl-THF ring system in aspoquinolone. The chain is Prenyltransferase asqH1 from Emericella nidulans (strain FGSC A4 / ATCC 38163 / CBS 112.46 / NRRL 194 / M139) (Aspergillus nidulans).